A 60-amino-acid polypeptide reads, in one-letter code: Large ribosomal subunit protein bL32 (60 aa).

It belongs to the bacterial ribosomal protein bL32 family.

This chain is Large ribosomal subunit protein bL32, found in Streptococcus mutans serotype c (strain ATCC 700610 / UA159).